The chain runs to 172 residues: Small ribosomal subunit protein uS5 (172 aa).

In terms of domain architecture, S5 DRBM spans Met-17 to Val-80.

This sequence belongs to the universal ribosomal protein uS5 family. As to quaternary structure, part of the 30S ribosomal subunit. Contacts proteins S4 and S8.

Functionally, with S4 and S12 plays an important role in translational accuracy. Located at the back of the 30S subunit body where it stabilizes the conformation of the head with respect to the body. This is Small ribosomal subunit protein uS5 from Herminiimonas arsenicoxydans.